Consider the following 890-residue polypeptide: Translation initiation factor IF-2 (890 aa).

The tract at residues 45–304 is disordered; the sequence is LIDHLNQKNS…LQQGFQKPAQ (260 aa). Polar residues predominate over residues 67-81; that stretch reads STLNIPGTGGKSKSV. Residues 92-217 show a composition bias toward basic and acidic residues; sequence VKRDPQEAER…RMAEENKWTD (126 aa). A compositionally biased stretch (basic residues) spans 252 to 266; it reads GRGRNAKAARPKKGN. The span at 267 to 280 shows a compositional bias: basic and acidic residues; it reads KHSESKADREEARA. The 170-residue stretch at 389 to 558 folds into the tr-type G domain; sequence PRAPVVTIMG…LLQAEVLELK (170 aa). A G1 region spans residues 398–405; sequence GHVDHGKT. 398–405 contacts GTP; that stretch reads GHVDHGKT. The interval 423-427 is G2; sequence GITQH. Positions 444-447 are G3; it reads DTPG. GTP is bound by residues 444 to 448 and 498 to 501; these read DTPGH and NKID. Positions 498–501 are G4; it reads NKID. The G5 stretch occupies residues 534–536; it reads SAK. N6-acetyllysine is present on Lys808.

Belongs to the TRAFAC class translation factor GTPase superfamily. Classic translation factor GTPase family. IF-2 subfamily.

It is found in the cytoplasm. One of the essential components for the initiation of protein synthesis. Protects formylmethionyl-tRNA from spontaneous hydrolysis and promotes its binding to the 30S ribosomal subunits. Also involved in the hydrolysis of GTP during the formation of the 70S ribosomal complex. The protein is Translation initiation factor IF-2 of Escherichia fergusonii (strain ATCC 35469 / DSM 13698 / CCUG 18766 / IAM 14443 / JCM 21226 / LMG 7866 / NBRC 102419 / NCTC 12128 / CDC 0568-73).